The primary structure comprises 459 residues: Serine--tRNA ligase (459 aa).

254 to 256 is a binding site for L-serine; the sequence is TAE. Residues 285–287 and Val301 contribute to the ATP site; that span reads RKE. Glu308 is an L-serine binding site. An ATP-binding site is contributed by 372–375; the sequence is EMVS. An L-serine-binding site is contributed by Thr408.

Belongs to the class-II aminoacyl-tRNA synthetase family. Type-1 seryl-tRNA synthetase subfamily. Homodimer. The tRNA molecule binds across the dimer.

The protein resides in the cytoplasm. The enzyme catalyses tRNA(Ser) + L-serine + ATP = L-seryl-tRNA(Ser) + AMP + diphosphate + H(+). It catalyses the reaction tRNA(Sec) + L-serine + ATP = L-seryl-tRNA(Sec) + AMP + diphosphate + H(+). It functions in the pathway aminoacyl-tRNA biosynthesis; selenocysteinyl-tRNA(Sec) biosynthesis; L-seryl-tRNA(Sec) from L-serine and tRNA(Sec): step 1/1. In terms of biological role, catalyzes the attachment of serine to tRNA(Ser). Is also able to aminoacylate tRNA(Sec) with serine, to form the misacylated tRNA L-seryl-tRNA(Sec), which will be further converted into selenocysteinyl-tRNA(Sec). This Staphylothermus marinus (strain ATCC 43588 / DSM 3639 / JCM 9404 / F1) protein is Serine--tRNA ligase.